Here is a 129-residue protein sequence, read N- to C-terminus: Small ribosomal subunit protein uS11 (129 aa).

It belongs to the universal ribosomal protein uS11 family. In terms of assembly, part of the 30S ribosomal subunit. Interacts with proteins S7 and S18. Binds to IF-3.

Located on the platform of the 30S subunit, it bridges several disparate RNA helices of the 16S rRNA. Forms part of the Shine-Dalgarno cleft in the 70S ribosome. In Nitrosomonas europaea (strain ATCC 19718 / CIP 103999 / KCTC 2705 / NBRC 14298), this protein is Small ribosomal subunit protein uS11.